A 758-amino-acid polypeptide reads, in one-letter code: 5-methyltetrahydropteroyltriglutamate--homocysteine methyltransferase (758 aa).

5-methyltetrahydropteroyltri-L-glutamate-binding positions include 17–20 and Lys-117; that span reads RELK. L-homocysteine contacts are provided by residues 434 to 436 and Glu-487; that span reads IGS. Residues 434 to 436 and Glu-487 each bind L-methionine; that span reads IGS. 5-methyltetrahydropteroyltri-L-glutamate contacts are provided by residues 518 to 519 and Trp-564; that span reads RC. Residue Asp-602 coordinates L-homocysteine. Asp-602 is a binding site for L-methionine. Residue Glu-608 coordinates 5-methyltetrahydropteroyltri-L-glutamate. The Zn(2+) site is built by His-644, Cys-646, and Glu-668. Catalysis depends on His-697, which acts as the Proton donor. Cys-729 lines the Zn(2+) pocket.

This sequence belongs to the vitamin-B12 independent methionine synthase family. The cofactor is Zn(2+).

It carries out the reaction 5-methyltetrahydropteroyltri-L-glutamate + L-homocysteine = tetrahydropteroyltri-L-glutamate + L-methionine. It participates in amino-acid biosynthesis; L-methionine biosynthesis via de novo pathway; L-methionine from L-homocysteine (MetE route): step 1/1. Functionally, catalyzes the transfer of a methyl group from 5-methyltetrahydrofolate to homocysteine resulting in methionine formation. This chain is 5-methyltetrahydropteroyltriglutamate--homocysteine methyltransferase, found in Yersinia pseudotuberculosis serotype I (strain IP32953).